A 101-amino-acid chain; its full sequence is Small ribosomal subunit protein bS18c (101 aa).

Over residues 1 to 19 the composition is skewed to basic residues; that stretch reads MDKSKQPFRKSKRSFRRRL. A disordered region spans residues 1-26; that stretch reads MDKSKQPFRKSKRSFRRRLPPIGSGD.

It belongs to the bacterial ribosomal protein bS18 family. As to quaternary structure, part of the 30S ribosomal subunit.

The protein resides in the plastid. It is found in the chloroplast. The chain is Small ribosomal subunit protein bS18c from Phalaenopsis aphrodite subsp. formosana (Moth orchid).